A 210-amino-acid polypeptide reads, in one-letter code: Thiamine-phosphate synthase (210 aa).

Residues 36-40 (QLRIK) and Asn68 contribute to the 4-amino-2-methyl-5-(diphosphooxymethyl)pyrimidine site. 2 residues coordinate Mg(2+): Asp69 and Asp88. Residue Ser107 coordinates 4-amino-2-methyl-5-(diphosphooxymethyl)pyrimidine. 133–135 (TQT) provides a ligand contact to 2-[(2R,5Z)-2-carboxy-4-methylthiazol-5(2H)-ylidene]ethyl phosphate. Lys136 contributes to the 4-amino-2-methyl-5-(diphosphooxymethyl)pyrimidine binding site. 2-[(2R,5Z)-2-carboxy-4-methylthiazol-5(2H)-ylidene]ethyl phosphate is bound by residues Gly165 and 185-186 (VS).

It belongs to the thiamine-phosphate synthase family. Requires Mg(2+) as cofactor.

It catalyses the reaction 2-[(2R,5Z)-2-carboxy-4-methylthiazol-5(2H)-ylidene]ethyl phosphate + 4-amino-2-methyl-5-(diphosphooxymethyl)pyrimidine + 2 H(+) = thiamine phosphate + CO2 + diphosphate. The catalysed reaction is 2-(2-carboxy-4-methylthiazol-5-yl)ethyl phosphate + 4-amino-2-methyl-5-(diphosphooxymethyl)pyrimidine + 2 H(+) = thiamine phosphate + CO2 + diphosphate. It carries out the reaction 4-methyl-5-(2-phosphooxyethyl)-thiazole + 4-amino-2-methyl-5-(diphosphooxymethyl)pyrimidine + H(+) = thiamine phosphate + diphosphate. It functions in the pathway cofactor biosynthesis; thiamine diphosphate biosynthesis; thiamine phosphate from 4-amino-2-methyl-5-diphosphomethylpyrimidine and 4-methyl-5-(2-phosphoethyl)-thiazole: step 1/1. Its function is as follows. Condenses 4-methyl-5-(beta-hydroxyethyl)thiazole monophosphate (THZ-P) and 2-methyl-4-amino-5-hydroxymethyl pyrimidine pyrophosphate (HMP-PP) to form thiamine monophosphate (TMP). The chain is Thiamine-phosphate synthase from Cronobacter sakazakii (strain ATCC BAA-894) (Enterobacter sakazakii).